A 402-amino-acid chain; its full sequence is UPF0261 protein BPP1817 (402 aa).

The protein belongs to the UPF0261 family.

This chain is UPF0261 protein BPP1817, found in Bordetella parapertussis (strain 12822 / ATCC BAA-587 / NCTC 13253).